We begin with the raw amino-acid sequence, 361 residues long: Outer mitochondrial transmembrane helix translocase (361 aa).

Topologically, residues 1-15 are mitochondrial intermembrane; it reads MVHAEAFSRPLSRNE. The helical transmembrane segment at 16-32 threads the bilayer; the sequence is VVGLIFRLTIFGAVTYF. At 33 to 361 the chain is on the cytoplasmic side; that stretch reads TIKWMVDAID…QNVLTHVCLD (329 aa). 133–140 contacts ATP; that stretch reads GPPGCGKT. The residue at position 322 (Ser322) is a Phosphoserine.

Belongs to the AAA ATPase family. MSP1 subfamily. As to quaternary structure, interacts with GRIA2 and GRIP1 in an ATP-dependent manner. ATAD1-catalyzed ATP hydrolysis disrupts not only its binding to GRIA2 and GRIP1, but also interaction between GRIP1 and GRIA2, leading to AMPAR complex disassembly.

The protein resides in the mitochondrion outer membrane. The protein localises to the peroxisome membrane. Its subcellular location is the postsynaptic cell membrane. It catalyses the reaction [protein]-with a C-terminal TM segment(out) + ATP + H2O = [protein]-with a C-terminal TM segment(in) + ADP + phosphate + H(+). Functionally, outer mitochondrial translocase required to remove mislocalized tail-anchored transmembrane proteins on mitochondria. Specifically recognizes and binds tail-anchored transmembrane proteins: acts as a dislocase that mediates the ATP-dependent extraction of mistargeted tail-anchored transmembrane proteins from the mitochondrion outer membrane. Also plays a critical role in regulating the surface expression of AMPA receptors (AMPAR), thereby regulating synaptic plasticity and learning and memory. Required for NMDA-stimulated AMPAR internalization and inhibition of GRIA1 and GRIA2 recycling back to the plasma membrane; these activities are ATPase-dependent. This Homo sapiens (Human) protein is Outer mitochondrial transmembrane helix translocase.